The sequence spans 192 residues: ADP-ribose glycohydrolase AF_1521 (192 aa).

The 192-residue stretch at 1 to 192 (MEVLFEAKVG…VALKVFERSL (192 aa)) folds into the Macro domain. Residues 19 to 21 (GDI), 32 to 34 (AAN), 39 to 44 (HGGGVA), and 140 to 146 (VSAGIYG) each bind substrate.

The enzyme catalyses 5-O-(ADP-D-ribosyl)-L-glutamyl-[protein] + H2O = L-glutamyl-[protein] + ADP-D-ribose + H(+). It carries out the reaction 4-O-(ADP-D-ribosyl)-L-aspartyl-[protein] + H2O = L-aspartyl-[protein] + ADP-D-ribose + H(+). It catalyses the reaction alpha-NAD(+) + H2O = ADP-D-ribose + nicotinamide + H(+). Functionally, removes ADP-ribose from aspartate and glutamate residues in proteins bearing a single ADP-ribose moiety. Inactive towards proteins bearing poly-ADP-ribose. Catalyzes removal of a phosphate group from ADP-ribose 1''-phosphate (Appr1p), but with low efficiency. The protein is ADP-ribose glycohydrolase AF_1521 of Archaeoglobus fulgidus (strain ATCC 49558 / DSM 4304 / JCM 9628 / NBRC 100126 / VC-16).